A 265-amino-acid polypeptide reads, in one-letter code: Undecaprenyl-diphosphatase (265 aa).

Helical transmembrane passes span 42–62, 82–102, 108–128, 157–177, 181–201, 217–237, and 244–264; these read AATFDVVIQLGAIMAVVVLYW, GIVLLMLTSLPACILGLLLHA, LFRPATVLIALVVGAICMILV, LALWPGFSRSAATIMGGMLLG, PLAAEYSFIAAVPIMVAATGY, FFLVGMIGSFVSALLAVKVFV, and TLIPFACYRLLIAPFVYYFMV.

Belongs to the UppP family.

Its subcellular location is the cell inner membrane. It catalyses the reaction di-trans,octa-cis-undecaprenyl diphosphate + H2O = di-trans,octa-cis-undecaprenyl phosphate + phosphate + H(+). Catalyzes the dephosphorylation of undecaprenyl diphosphate (UPP). Confers resistance to bacitracin. This is Undecaprenyl-diphosphatase from Desulfovibrio desulfuricans (strain ATCC 27774 / DSM 6949 / MB).